A 795-amino-acid polypeptide reads, in one-letter code: Protein ROOT HAIR DEFECTIVE 3 homolog 1 (795 aa).

The Cytoplasmic portion of the chain corresponds to M1–L682. Positions G39–R254 constitute a GB1/RHD3-type G domain. G49–S56 lines the GTP pocket. Residues V218–S244 are a coiled coil. A helical transmembrane segment spans residues P683–L703. The Lumenal portion of the chain corresponds to R704–P706. A helical transmembrane segment spans residues L707–D727. Residues I728 to D795 lie on the Cytoplasmic side of the membrane. The interval Q761–D795 is disordered. Over residues S775–N784 the composition is skewed to low complexity. Positions P785–D795 are enriched in basic and acidic residues.

Belongs to the TRAFAC class dynamin-like GTPase superfamily. GB1/RHD3 GTPase family. RHD3 subfamily. As to expression, specifically expressed in flowers.

The protein localises to the endoplasmic reticulum membrane. Its function is as follows. Probable GTP-binding protein that may be involved in cell development. In Arabidopsis thaliana (Mouse-ear cress), this protein is Protein ROOT HAIR DEFECTIVE 3 homolog 1.